The following is a 599-amino-acid chain: Elongation factor 4 (599 aa).

The region spanning 5–187 is the tr-type G domain; that stretch reads SHIRNFSIIA…ELVRLVPPPT (183 aa). Residues 17–22 and 134–137 contribute to the GTP site; these read DHGKST and NKMD.

Belongs to the TRAFAC class translation factor GTPase superfamily. Classic translation factor GTPase family. LepA subfamily.

It is found in the cell inner membrane. The catalysed reaction is GTP + H2O = GDP + phosphate + H(+). Required for accurate and efficient protein synthesis under certain stress conditions. May act as a fidelity factor of the translation reaction, by catalyzing a one-codon backward translocation of tRNAs on improperly translocated ribosomes. Back-translocation proceeds from a post-translocation (POST) complex to a pre-translocation (PRE) complex, thus giving elongation factor G a second chance to translocate the tRNAs correctly. Binds to ribosomes in a GTP-dependent manner. This Cellvibrio japonicus (strain Ueda107) (Pseudomonas fluorescens subsp. cellulosa) protein is Elongation factor 4.